The primary structure comprises 218 residues: 23 kDa integral membrane protein (218 aa).

Residues 1–12 (MATLGTGMRCLK) lie on the Cytoplasmic side of the membrane. Residues 13–36 (SCVFILNIICLLCSLVLIGAGAYV) traverse the membrane as a helical segment. Residues 37–55 (EVKFSQYEANLHKVWQAAP) are Extracellular-facing. A helical membrane pass occupies residues 56–71 (IAIIVVGVVILIVSFL). Residues 72 to 82 (GCCGAIKENVC) lie on the Cytoplasmic side of the membrane. The helical transmembrane segment at 83 to 108 (MLYMYAFFLIVLLIAELVAAIVAVVY) threads the bilayer. Over 109–183 (KDKIDDEINT…SVFSAFLKRN (75 aa)) the chain is Extracellular. Residues 184 to 205 (LIIVACVAFGVCFFQLLSIVIA) form a helical membrane-spanning segment. At 206-218 (CCLGQRIHDYQNV) the chain is on the cytoplasmic side.

Belongs to the tetraspanin (TM4SF) family.

The protein resides in the membrane. In Schistosoma japonicum (Blood fluke), this protein is 23 kDa integral membrane protein.